Consider the following 1058-residue polypeptide: Isoleucine--tRNA ligase (1058 aa).

The 'HIGH' region motif lies at 48–58 (PYTTGHIHLGT). The 'KMSKS' region motif lies at 596–600 (KMSKS). An ATP-binding site is contributed by lysine 599.

The protein belongs to the class-I aminoacyl-tRNA synthetase family. IleS type 2 subfamily. As to quaternary structure, monomer. Requires Zn(2+) as cofactor.

The protein resides in the cytoplasm. It catalyses the reaction tRNA(Ile) + L-isoleucine + ATP = L-isoleucyl-tRNA(Ile) + AMP + diphosphate. In terms of biological role, catalyzes the attachment of isoleucine to tRNA(Ile). As IleRS can inadvertently accommodate and process structurally similar amino acids such as valine, to avoid such errors it has two additional distinct tRNA(Ile)-dependent editing activities. One activity is designated as 'pretransfer' editing and involves the hydrolysis of activated Val-AMP. The other activity is designated 'posttransfer' editing and involves deacylation of mischarged Val-tRNA(Ile). This Methanosarcina acetivorans (strain ATCC 35395 / DSM 2834 / JCM 12185 / C2A) protein is Isoleucine--tRNA ligase.